A 137-amino-acid polypeptide reads, in one-letter code: Methylglyoxal synthase (137 aa).

The MGS-like domain maps to 1-137; the sequence is MKIALIAHDK…DLLRGEEPNV (137 aa). Substrate is bound by residues His8, Lys12, 34-37, and 54-55; these read TGTT and SG. Asp60 (proton donor/acceptor) is an active-site residue. A substrate-binding site is contributed by His87.

Belongs to the methylglyoxal synthase family.

The catalysed reaction is dihydroxyacetone phosphate = methylglyoxal + phosphate. Its function is as follows. Catalyzes the formation of methylglyoxal from dihydroxyacetone phosphate. The sequence is that of Methylglyoxal synthase from Bacillus subtilis (strain 168).